Here is a 76-residue protein sequence, read N- to C-terminus: Acyl carrier protein (76 aa).

Positions 1-76 (MATFDKVKDI…DVVNYIEQNQ (76 aa)) constitute a Carrier domain. Serine 36 bears the O-(pantetheine 4'-phosphoryl)serine mark.

The protein belongs to the acyl carrier protein (ACP) family. Post-translationally, 4'-phosphopantetheine is transferred from CoA to a specific serine of apo-ACP by AcpS. This modification is essential for activity because fatty acids are bound in thioester linkage to the sulfhydryl of the prosthetic group.

It localises to the cytoplasm. The protein operates within lipid metabolism; fatty acid biosynthesis. Functionally, carrier of the growing fatty acid chain in fatty acid biosynthesis. In Natranaerobius thermophilus (strain ATCC BAA-1301 / DSM 18059 / JW/NM-WN-LF), this protein is Acyl carrier protein.